The primary structure comprises 227 residues: Fibrillarin-like rRNA/tRNA 2'-O-methyltransferase (227 aa).

S-adenosyl-L-methionine contacts are provided by residues 82–83, 100–101, 125–126, and 145–148; these read TT, EF, DA, and DVAQ.

It belongs to the methyltransferase superfamily. Fibrillarin family. As to quaternary structure, interacts with nop5. Component of box C/D small ribonucleoprotein (sRNP) particles that contain rpl7ae, FlpA and nop5, plus a guide RNA.

In terms of biological role, involved in pre-rRNA and tRNA processing. Utilizes the methyl donor S-adenosyl-L-methionine to catalyze the site-specific 2'-hydroxyl methylation of ribose moieties in rRNA and tRNA. Site specificity is provided by a guide RNA that base pairs with the substrate. Methylation occurs at a characteristic distance from the sequence involved in base pairing with the guide RNA. This Methanosarcina acetivorans (strain ATCC 35395 / DSM 2834 / JCM 12185 / C2A) protein is Fibrillarin-like rRNA/tRNA 2'-O-methyltransferase.